We begin with the raw amino-acid sequence, 251 residues long: Pyrroloquinoline-quinone synthase (251 aa).

It belongs to the PqqC family.

The catalysed reaction is 6-(2-amino-2-carboxyethyl)-7,8-dioxo-1,2,3,4,7,8-hexahydroquinoline-2,4-dicarboxylate + 3 O2 = pyrroloquinoline quinone + 2 H2O2 + 2 H2O + H(+). It functions in the pathway cofactor biosynthesis; pyrroloquinoline quinone biosynthesis. In terms of biological role, ring cyclization and eight-electron oxidation of 3a-(2-amino-2-carboxyethyl)-4,5-dioxo-4,5,6,7,8,9-hexahydroquinoline-7,9-dicarboxylic-acid to PQQ. The protein is Pyrroloquinoline-quinone synthase of Pseudomonas syringae pv. tomato (strain ATCC BAA-871 / DC3000).